Reading from the N-terminus, the 444-residue chain is Probable D-serine dehydratase (444 aa).

N6-(pyridoxal phosphate)lysine is present on Lys118.

Belongs to the serine/threonine dehydratase family. DsdA subfamily. The cofactor is pyridoxal 5'-phosphate.

The enzyme catalyses D-serine = pyruvate + NH4(+). This is Probable D-serine dehydratase from Desulfitobacterium hafniense (strain Y51).